Reading from the N-terminus, the 365-residue chain is Chorismate synthase (365 aa).

Positions 48 and 54 each coordinate NADP(+). Residues 129-131 (RSS), 241-242 (NA), G285, 300-304 (KPTSS), and R326 contribute to the FMN site.

The protein belongs to the chorismate synthase family. In terms of assembly, homotetramer. It depends on FMNH2 as a cofactor.

It carries out the reaction 5-O-(1-carboxyvinyl)-3-phosphoshikimate = chorismate + phosphate. The protein operates within metabolic intermediate biosynthesis; chorismate biosynthesis; chorismate from D-erythrose 4-phosphate and phosphoenolpyruvate: step 7/7. Its function is as follows. Catalyzes the anti-1,4-elimination of the C-3 phosphate and the C-6 proR hydrogen from 5-enolpyruvylshikimate-3-phosphate (EPSP) to yield chorismate, which is the branch point compound that serves as the starting substrate for the three terminal pathways of aromatic amino acid biosynthesis. This reaction introduces a second double bond into the aromatic ring system. This chain is Chorismate synthase, found in Parvibaculum lavamentivorans (strain DS-1 / DSM 13023 / NCIMB 13966).